A 127-amino-acid chain; its full sequence is MRHILERIFFTSFAKKGWLKMLCAFEGLVDEKTKERLRKRNYHGNTCLHIATEEHRGRQAIWLIEKLVEYGADLDEKKHCDGDTVLHMAVKKGDYKLATWMCQQLSMRFGSRKLSQPHGVSSSIEKR.

ANK repeat units follow at residues 43–76 (HGNT…DLDE) and 81–111 (DGDT…RFGS).

The protein belongs to the polydnaviridae I-Kappa-B-like protein family.

Functionally, suppresses the host immune response through NF-kappa-B inactivation. Possesses ankyrin repeat domains required for NF-kappa-B binding but lacks the regulatory regions required for dissociation from NF-kappa-B and degradation. Therefore, prevents host NF-kappa-B release and subsequent activation. The polypeptide is I-Kappa-B like protein J1 (J2) (Microplitis demolitor (Parasitoid wasp)).